The primary structure comprises 131 residues: Transcription antitermination protein NusB (131 aa).

This sequence belongs to the NusB family.

In terms of biological role, involved in transcription antitermination. Required for transcription of ribosomal RNA (rRNA) genes. Binds specifically to the boxA antiterminator sequence of the ribosomal RNA (rrn) operons. The protein is Transcription antitermination protein NusB of Aliarcobacter butzleri (strain RM4018) (Arcobacter butzleri).